The sequence spans 92 residues: Small integral membrane protein 12 (92 aa).

Residues 12–34 form a helical membrane-spanning segment; that stretch reads YAPYVTFPVAFVVGAVGYHLEWF.

This sequence belongs to the SMIM12 family.

The protein localises to the membrane. This Bos taurus (Bovine) protein is Small integral membrane protein 12 (SMIM12).